The primary structure comprises 246 residues: 1-(5-phosphoribosyl)-5-[(5-phosphoribosylamino)methylideneamino] imidazole-4-carboxamide isomerase (246 aa).

The active-site Proton acceptor is the aspartate 8. Catalysis depends on aspartate 131, which acts as the Proton donor.

This sequence belongs to the HisA/HisF family.

It localises to the cytoplasm. The enzyme catalyses 1-(5-phospho-beta-D-ribosyl)-5-[(5-phospho-beta-D-ribosylamino)methylideneamino]imidazole-4-carboxamide = 5-[(5-phospho-1-deoxy-D-ribulos-1-ylimino)methylamino]-1-(5-phospho-beta-D-ribosyl)imidazole-4-carboxamide. The protein operates within amino-acid biosynthesis; L-histidine biosynthesis; L-histidine from 5-phospho-alpha-D-ribose 1-diphosphate: step 4/9. The protein is 1-(5-phosphoribosyl)-5-[(5-phosphoribosylamino)methylideneamino] imidazole-4-carboxamide isomerase of Bordetella petrii (strain ATCC BAA-461 / DSM 12804 / CCUG 43448).